We begin with the raw amino-acid sequence, 160 residues long: 6,7-dimethyl-8-ribityllumazine synthase (160 aa).

5-amino-6-(D-ribitylamino)uracil contacts are provided by residues phenylalanine 22, 57 to 59, and 81 to 83; these read TYE and TII. Residue 86-87 coordinates (2S)-2-hydroxy-3-oxobutyl phosphate; that stretch reads QT. Residue histidine 89 is the Proton donor of the active site. Leucine 114 serves as a coordination point for 5-amino-6-(D-ribitylamino)uracil. Arginine 128 is a (2S)-2-hydroxy-3-oxobutyl phosphate binding site.

It belongs to the DMRL synthase family. In terms of assembly, forms an icosahedral capsid composed of 60 subunits, arranged as a dodecamer of pentamers.

The enzyme catalyses (2S)-2-hydroxy-3-oxobutyl phosphate + 5-amino-6-(D-ribitylamino)uracil = 6,7-dimethyl-8-(1-D-ribityl)lumazine + phosphate + 2 H2O + H(+). Its pathway is cofactor biosynthesis; riboflavin biosynthesis; riboflavin from 2-hydroxy-3-oxobutyl phosphate and 5-amino-6-(D-ribitylamino)uracil: step 1/2. Functionally, catalyzes the formation of 6,7-dimethyl-8-ribityllumazine by condensation of 5-amino-6-(D-ribitylamino)uracil with 3,4-dihydroxy-2-butanone 4-phosphate. This is the penultimate step in the biosynthesis of riboflavin. This chain is 6,7-dimethyl-8-ribityllumazine synthase, found in Buchnera aphidicola subsp. Acyrthosiphon pisum (strain APS) (Acyrthosiphon pisum symbiotic bacterium).